The chain runs to 196 residues: MEKFVTHTGVGVPLRVSNVDTDQIIPARYLKSVKRTGFADGLFSNWRSDENFILNQEPFKEGSVLFAGPDFGTGSSREHAVWALAEYGFKAVFSSRFADIFRGNSGKAGLLTGLMEQEDIELIWKQLESGETETTVDLEARTVTVGGNSYTFEIDDYTRWRLMEGLDDIGLTLRNEGDIEAFESTRPGFKPRVVAS.

This sequence belongs to the LeuD family. LeuD type 1 subfamily. In terms of assembly, heterodimer of LeuC and LeuD.

It carries out the reaction (2R,3S)-3-isopropylmalate = (2S)-2-isopropylmalate. Its pathway is amino-acid biosynthesis; L-leucine biosynthesis; L-leucine from 3-methyl-2-oxobutanoate: step 2/4. Catalyzes the isomerization between 2-isopropylmalate and 3-isopropylmalate, via the formation of 2-isopropylmaleate. The chain is 3-isopropylmalate dehydratase small subunit from Corynebacterium aurimucosum (strain ATCC 700975 / DSM 44827 / CIP 107346 / CN-1) (Corynebacterium nigricans).